Here is a 591-residue protein sequence, read N- to C-terminus: Protein kinase C zeta type (591 aa).

In terms of domain architecture, PB1 spans 15-98; it reads RVRLKAHYSG…DGLILHVFPS (84 aa). Positions 79 to 145 are interaction with SQSTM1; that stretch reads AFRLAGQHRD…KRFNRRAYCG (67 aa). The segment at 130-180 adopts a Phorbol-ester/DAG-type zinc-finger fold; it reads GHLFQAKRFNRRAYCGQCSERIWGLARQGYRCINCKLLVHKRCHGLVPLTC. In terms of domain architecture, Protein kinase spans 251–517; the sequence is FDLIRVIGRG…FSDIKSHAFF (267 aa). ATP-binding positions include 257-265 and Lys-280; that span reads IGRGSYAKV. The active-site Proton acceptor is Asp-375. Position 409 is a phosphothreonine; by PDPK1 and PI3K (Thr-409). Residues 518 to 589 form the AGC-kinase C-terminal domain; sequence RSIDWDLLEK…INPLLLSTEE (72 aa). Thr-559 carries the phosphothreonine modification. Ser-590 is subject to Phosphoserine.

Belongs to the protein kinase superfamily. AGC Ser/Thr protein kinase family. PKC subfamily. As to quaternary structure, interacts with PARD6A, PARD6B and PARD6G. Part of a complex with PARD3, PARD6A or PARD6B or PARD6G and CDC42 or RAC1. Interacts with ADAP1/CENTA1. Interacts directly with SQSTM1. Forms a ternary complex with SQSTM1 and KCNAB2. Forms another ternary complex with SQSTM1 and GABRR3. Forms a complex with SQSTM1 and MAP2K5. Interacts (via the protein kinase domain) with WWC1. Forms a tripartite complex with WWC1 and DDR1, but predominantly in the absence of collagen. Component of the Par polarity complex, composed of at least phosphorylated PRKCZ, PARD3 and TIAM1. Interacts with PDPK1 (via N-terminal region). Interacts with WDFY2 (via WD repeats 1-3). Interacts with VAMP2. Forms a complex with WDFY2 and VAMP2. Interacts with APPL1. Interacts with WWC1, WWC2 and WWC3. CDH5 is required for its phosphorylation at Thr-409. Phosphorylated by protein kinase PDPK1; phosphorylation is inhibited by the apoptotic C-terminal cleavage product of PKN2. Phosphorylation at Thr-409 by PI3K activates the kinase.

Its subcellular location is the cytoplasm. It is found in the endosome. It localises to the cell junction. The protein resides in the membrane. It carries out the reaction L-seryl-[protein] + ATP = O-phospho-L-seryl-[protein] + ADP + H(+). The enzyme catalyses L-threonyl-[protein] + ATP = O-phospho-L-threonyl-[protein] + ADP + H(+). Atypical PKCs (PRKCI and PRKCZ) exhibit an elevated basal enzymatic activity (that may be due to the interaction with SMG1 or SQSTM1) and are not regulated by diacylglycerol, phosphatidylserine, phorbol esters or calcium ions. Two specific sites, Thr-409 (activation loop of the kinase domain) and Thr-559 (turn motif), need to be phosphorylated for its full activation. Phosphatidylinositol 3,4,5-trisphosphate might be a physiological activator. In terms of biological role, calcium- and diacylglycerol-independent serine/threonine-protein kinase that functions in phosphatidylinositol 3-kinase (PI3K) pathway and mitogen-activated protein (MAP) kinase cascade, and is involved in NF-kappa-B activation, mitogenic signaling, cell proliferation, cell polarity, inflammatory response and maintenance of long-term potentiation (LTP). Upon lipopolysaccharide (LPS) treatment in macrophages, or following mitogenic stimuli, functions downstream of PI3K to activate MAP2K1/MEK1-MAPK1/ERK2 signaling cascade independently of RAF1 activation. Required for insulin-dependent activation of AKT3, but may function as an adapter rather than a direct activator. Upon insulin treatment may act as a downstream effector of PI3K and contribute to the activation of translocation of the glucose transporter SLC2A4/GLUT4 and subsequent glucose transport in adipocytes. In EGF-induced cells, binds and activates MAP2K5/MEK5-MAPK7/ERK5 independently of its kinase activity and can activate JUN promoter through MEF2C. Through binding with SQSTM1/p62, functions in interleukin-1 signaling and activation of NF-kappa-B with the specific adapters RIPK1 and TRAF6. Participates in TNF-dependent transactivation of NF-kappa-B by phosphorylating and activating IKBKB kinase, which in turn leads to the degradation of NF-kappa-B inhibitors. In migrating astrocytes, forms a cytoplasmic complex with PARD6A and is recruited by CDC42 to function in the establishment of cell polarity along with the microtubule motor and dynein. In association with FEZ1, stimulates neuronal differentiation in PC12 cells. In the inflammatory response, is required for the T-helper 2 (Th2) differentiation process, including interleukin production, efficient activation of JAK1 and the subsequent phosphorylation and nuclear translocation of STAT6. May be involved in development of allergic airway inflammation (asthma), a process dependent on Th2 immune response. In the NF-kappa-B-mediated inflammatory response, can relieve SETD6-dependent repression of NF-kappa-B target genes by phosphorylating the RELA subunit at 'Ser-311'. Phosphorylates VAMP2 in vitro. Phosphorylates and activates LRRK1, which phosphorylates RAB proteins involved in intracellular trafficking. This chain is Protein kinase C zeta type (PRKCZ), found in Oryctolagus cuniculus (Rabbit).